Reading from the N-terminus, the 1067-residue chain is Isoleucine--tRNA ligase (1067 aa).

The short motif at 49 to 59 is the 'HIGH' region element; sequence PYVSGAIHLGT. A 'KMSKS' region motif is present at residues 625-629; that stretch reads KMSKS. Lys628 lines the ATP pocket.

The protein belongs to the class-I aminoacyl-tRNA synthetase family. IleS type 2 subfamily. As to quaternary structure, monomer. Zn(2+) serves as cofactor.

The protein localises to the cytoplasm. It catalyses the reaction tRNA(Ile) + L-isoleucine + ATP = L-isoleucyl-tRNA(Ile) + AMP + diphosphate. Catalyzes the attachment of isoleucine to tRNA(Ile). As IleRS can inadvertently accommodate and process structurally similar amino acids such as valine, to avoid such errors it has two additional distinct tRNA(Ile)-dependent editing activities. One activity is designated as 'pretransfer' editing and involves the hydrolysis of activated Val-AMP. The other activity is designated 'posttransfer' editing and involves deacylation of mischarged Val-tRNA(Ile). This chain is Isoleucine--tRNA ligase, found in Pyrococcus abyssi (strain GE5 / Orsay).